Here is a 45-residue protein sequence, read N- to C-terminus: Omega-hexatoxin-Hv2a (45 aa).

Intrachain disulfides connect cysteine 4–cysteine 18, cysteine 11–cysteine 24, and cysteine 17–cysteine 29.

The protein belongs to the neurotoxin 15 family. 02 (omega-actx) subfamily. In terms of tissue distribution, expressed by the venom gland.

It is found in the secreted. In terms of biological role, potent inhibitor of insect (bee brain), but not mammalian (rat trigeminal neurons), voltage-gated calcium channels (Cav). In vivo, injection into lone star ticks (Amblyomma americanum) induces curling of all eight legs into closed loops, followed by death. This is Omega-hexatoxin-Hv2a from Hadronyche versuta (Blue mountains funnel-web spider).